The sequence spans 160 residues: MDLAIIDQTKAGVNQYHQDLVRCVLDYAGKYLELPDNTEMSVTFMNNEEIHQYNKKYRGIDKPTDVISFAIEEDGDDLPVLPDELMDAELAKNIGDILVSVDIINSQAEYLGHSYERELGFLVVHGFLHLNGYDHMLGDAEEKEMFDLQREILDNYGLKR.

Histidine 125, histidine 129, and histidine 135 together coordinate Zn(2+).

It belongs to the endoribonuclease YbeY family. The cofactor is Zn(2+).

The protein localises to the cytoplasm. Single strand-specific metallo-endoribonuclease involved in late-stage 70S ribosome quality control and in maturation of the 3' terminus of the 16S rRNA. This is Endoribonuclease YbeY from Leuconostoc mesenteroides subsp. mesenteroides (strain ATCC 8293 / DSM 20343 / BCRC 11652 / CCM 1803 / JCM 6124 / NCDO 523 / NBRC 100496 / NCIMB 8023 / NCTC 12954 / NRRL B-1118 / 37Y).